Consider the following 699-residue polypeptide: Elongation factor G (699 aa).

The tr-type G domain maps to 8–290 (NRYRNIGICA…AVIEFLPAPD (283 aa)). GTP contacts are provided by residues 17–24 (AHVDAGKT), 88–92 (DTPGH), and 142–145 (NKMD).

Belongs to the TRAFAC class translation factor GTPase superfamily. Classic translation factor GTPase family. EF-G/EF-2 subfamily.

The protein localises to the cytoplasm. Its function is as follows. Catalyzes the GTP-dependent ribosomal translocation step during translation elongation. During this step, the ribosome changes from the pre-translocational (PRE) to the post-translocational (POST) state as the newly formed A-site-bound peptidyl-tRNA and P-site-bound deacylated tRNA move to the P and E sites, respectively. Catalyzes the coordinated movement of the two tRNA molecules, the mRNA and conformational changes in the ribosome. The chain is Elongation factor G from Alcanivorax borkumensis (strain ATCC 700651 / DSM 11573 / NCIMB 13689 / SK2).